A 368-amino-acid polypeptide reads, in one-letter code: Saccharopine dehydrogenase [NAD(+), L-lysine-forming] (368 aa).

L-saccharopine is bound by residues Arg18 and Lys77. Residue Lys77 is the Proton acceptor of the active site. Ser85 is modified (phosphoserine). The Proton donor role is filled by His96. An L-saccharopine-binding site is contributed by Gln101. Arg130 provides a ligand contact to NAD(+). L-saccharopine contacts are provided by Arg131 and Phe135. NAD(+)-binding positions include 203-204 (GR), Asp227, Thr231, Tyr251, and Val278. The cysteines at positions 205 and 249 are disulfide-linked. 279 to 281 (SCD) contacts L-saccharopine. Residue 319-322 (IDHL) participates in NAD(+) binding.

Belongs to the AlaDH/PNT family. As to quaternary structure, monomer.

The enzyme catalyses L-saccharopine + NAD(+) + H2O = L-lysine + 2-oxoglutarate + NADH + H(+). Its pathway is amino-acid biosynthesis; L-lysine biosynthesis via AAA pathway; L-lysine from L-alpha-aminoadipate (fungal route): step 3/3. Catalyzes the NAD(+)-dependent cleavage of saccharopine to L-lysine and 2-oxoglutarate, the final step in the alpha-aminoadipate (AAA) pathway for lysin biosynthesis. In Schizosaccharomyces pombe (strain 972 / ATCC 24843) (Fission yeast), this protein is Saccharopine dehydrogenase [NAD(+), L-lysine-forming].